Here is a 156-residue protein sequence, read N- to C-terminus: Ribosome-binding factor A (156 aa).

A compositionally biased stretch (basic and acidic residues) spans 125–138; sequence RVREGAKHAGDPDP. Residues 125 to 156 form a disordered region; that stretch reads RVREGAKHAGDPDPYRVGGAEDTDGDTDGDER. Acidic residues predominate over residues 145–156; it reads EDTDGDTDGDER.

It belongs to the RbfA family. Monomer. Binds 30S ribosomal subunits, but not 50S ribosomal subunits or 70S ribosomes.

Its subcellular location is the cytoplasm. Its function is as follows. One of several proteins that assist in the late maturation steps of the functional core of the 30S ribosomal subunit. Associates with free 30S ribosomal subunits (but not with 30S subunits that are part of 70S ribosomes or polysomes). Required for efficient processing of 16S rRNA. May interact with the 5'-terminal helix region of 16S rRNA. The chain is Ribosome-binding factor A from Mycolicibacterium smegmatis (strain ATCC 700084 / mc(2)155) (Mycobacterium smegmatis).